The sequence spans 157 residues: 2-C-methyl-D-erythritol 2,4-cyclodiphosphate synthase (157 aa).

A divalent metal cation is bound by residues aspartate 8 and histidine 10. Residues 8 to 10 (DVH) and 34 to 35 (HS) each bind 4-CDP-2-C-methyl-D-erythritol 2-phosphate. Residue histidine 42 coordinates a divalent metal cation. 4-CDP-2-C-methyl-D-erythritol 2-phosphate is bound by residues 56 to 58 (DIG), 132 to 135 (TTNE), and arginine 142.

It belongs to the IspF family. As to quaternary structure, homotrimer. A divalent metal cation is required as a cofactor.

It catalyses the reaction 4-CDP-2-C-methyl-D-erythritol 2-phosphate = 2-C-methyl-D-erythritol 2,4-cyclic diphosphate + CMP. It functions in the pathway isoprenoid biosynthesis; isopentenyl diphosphate biosynthesis via DXP pathway; isopentenyl diphosphate from 1-deoxy-D-xylulose 5-phosphate: step 4/6. Its function is as follows. Involved in the biosynthesis of isopentenyl diphosphate (IPP) and dimethylallyl diphosphate (DMAPP), two major building blocks of isoprenoid compounds. Catalyzes the conversion of 4-diphosphocytidyl-2-C-methyl-D-erythritol 2-phosphate (CDP-ME2P) to 2-C-methyl-D-erythritol 2,4-cyclodiphosphate (ME-CPP) with a corresponding release of cytidine 5-monophosphate (CMP). This is 2-C-methyl-D-erythritol 2,4-cyclodiphosphate synthase from Prosthecochloris aestuarii (strain DSM 271 / SK 413).